Consider the following 305-residue polypeptide: tRNA pseudouridine synthase B (305 aa).

D39 serves as the catalytic Nucleophile.

It belongs to the pseudouridine synthase TruB family. Type 1 subfamily.

It catalyses the reaction uridine(55) in tRNA = pseudouridine(55) in tRNA. In terms of biological role, responsible for synthesis of pseudouridine from uracil-55 in the psi GC loop of transfer RNAs. The sequence is that of tRNA pseudouridine synthase B from Staphylococcus saprophyticus subsp. saprophyticus (strain ATCC 15305 / DSM 20229 / NCIMB 8711 / NCTC 7292 / S-41).